A 447-amino-acid chain; its full sequence is Adenylosuccinate synthetase (447 aa).

Residues 12–18 (GDEGKGK) and 40–42 (GHT) each bind GTP. The active-site Proton acceptor is the D13. Residues D13 and G40 each coordinate Mg(2+). IMP-binding positions include 13–16 (DEGK), 38–41 (NAGH), T128, R142, Q223, T238, and R302. Catalysis depends on H41, which acts as the Proton donor. 298-304 (TTTGRKR) is a substrate binding site. Residues R304, 330-332 (KLD), and 412-414 (SLG) contribute to the GTP site.

Belongs to the adenylosuccinate synthetase family. In terms of assembly, homodimer. The cofactor is Mg(2+).

It is found in the cytoplasm. The catalysed reaction is IMP + L-aspartate + GTP = N(6)-(1,2-dicarboxyethyl)-AMP + GDP + phosphate + 2 H(+). The protein operates within purine metabolism; AMP biosynthesis via de novo pathway; AMP from IMP: step 1/2. In terms of biological role, plays an important role in the de novo pathway of purine nucleotide biosynthesis. Catalyzes the first committed step in the biosynthesis of AMP from IMP. This is Adenylosuccinate synthetase from Nostoc sp. (strain PCC 7120 / SAG 25.82 / UTEX 2576).